A 193-amino-acid polypeptide reads, in one-letter code: MHIVLASTSRYRQEIIARLGLPFCAEPPVCDETPLPGETALETAVRLARVKAQSLAGKHPEALIIGSDQVALLDDKQIGKPGGFEQGVEMLKWMSGRTVVFHSALALYNTASGRLQECVGITRVTLRRLTEAQIRNYLTREPDALHCAGSAKSEGLGGALLEKVESDDPNALIGVPLFQLITMLGNEGVEVLK.

Asp-68 serves as the catalytic Proton acceptor.

It belongs to the Maf family. YceF subfamily. A divalent metal cation is required as a cofactor.

Its subcellular location is the cytoplasm. It carries out the reaction N(7)-methyl-GTP + H2O = N(7)-methyl-GMP + diphosphate + H(+). In terms of biological role, nucleoside triphosphate pyrophosphatase that hydrolyzes 7-methyl-GTP (m(7)GTP). May have a dual role in cell division arrest and in preventing the incorporation of modified nucleotides into cellular nucleic acids. The polypeptide is 7-methyl-GTP pyrophosphatase (Chromobacterium violaceum (strain ATCC 12472 / DSM 30191 / JCM 1249 / CCUG 213 / NBRC 12614 / NCIMB 9131 / NCTC 9757 / MK)).